The following is a 140-amino-acid chain: Methylglyoxal synthase (140 aa).

Positions 1 to 140 (MKIALIAHDK…RGRKGEINGL (140 aa)) constitute an MGS-like domain. Substrate contacts are provided by residues His-8, Lys-12, 34–37 (TGTT), and 54–55 (SG). Asp-60 serves as the catalytic Proton donor/acceptor. Residue His-87 participates in substrate binding.

The protein belongs to the methylglyoxal synthase family.

It carries out the reaction dihydroxyacetone phosphate = methylglyoxal + phosphate. Catalyzes the formation of methylglyoxal from dihydroxyacetone phosphate. The sequence is that of Methylglyoxal synthase from Geobacillus sp. (strain WCH70).